We begin with the raw amino-acid sequence, 404 residues long: Probable tRNA sulfurtransferase (404 aa).

One can recognise a THUMP domain in the interval 60–165; sequence QPVVEALKLV…DEAAYISYEE (106 aa). Residues 183-184, 208-209, R265, G287, and Q296 each bind ATP; these read ML and HF.

The protein belongs to the ThiI family.

The protein resides in the cytoplasm. The catalysed reaction is [ThiI sulfur-carrier protein]-S-sulfanyl-L-cysteine + a uridine in tRNA + 2 reduced [2Fe-2S]-[ferredoxin] + ATP + H(+) = [ThiI sulfur-carrier protein]-L-cysteine + a 4-thiouridine in tRNA + 2 oxidized [2Fe-2S]-[ferredoxin] + AMP + diphosphate. It catalyses the reaction [ThiS sulfur-carrier protein]-C-terminal Gly-Gly-AMP + S-sulfanyl-L-cysteinyl-[cysteine desulfurase] + AH2 = [ThiS sulfur-carrier protein]-C-terminal-Gly-aminoethanethioate + L-cysteinyl-[cysteine desulfurase] + A + AMP + 2 H(+). The protein operates within cofactor biosynthesis; thiamine diphosphate biosynthesis. Catalyzes the ATP-dependent transfer of a sulfur to tRNA to produce 4-thiouridine in position 8 of tRNAs, which functions as a near-UV photosensor. Also catalyzes the transfer of sulfur to the sulfur carrier protein ThiS, forming ThiS-thiocarboxylate. This is a step in the synthesis of thiazole, in the thiamine biosynthesis pathway. The sulfur is donated as persulfide by IscS. This is Probable tRNA sulfurtransferase from Streptococcus pyogenes serotype M5 (strain Manfredo).